The following is a 553-amino-acid chain: Copine-9 (553 aa).

2 C2 domains span residues 1–125 and 132–255; these read MSLG…ERTL and KCGT…FTVY. The N-linked (GlcNAc...) asparagine glycan is linked to Asn95. Ca(2+)-binding residues include Asp163, Asp169, Asp225, Asp227, and Asp233. The region spanning 299-500 is the VWFA domain; it reads NFTVAIDFTA…VQFVPFRDYV (202 aa). The interval 531 to 553 is disordered; it reads TRDIQPRPPPPANPSPIPAPEQP. Over residues 536–553 the composition is skewed to pro residues; the sequence is PRPPPPANPSPIPAPEQP.

It belongs to the copine family. Requires Ca(2+) as cofactor. As to expression, expressed in melanocytes.

Functionally, probable calcium-dependent phospholipid-binding protein that may play a role in calcium-mediated intracellular processes. Plays a role in dendrite formation by melanocytes. This Homo sapiens (Human) protein is Copine-9.